The chain runs to 1224 residues: MREGSFPRRTRLLCLLAAVVLISTVTSFNIDTKNVVLHHMANNYFGYSLDFYNEQKGMPVLVVGAPEAETTNPNLSGIRRPGAVYACSVNRPTCREVHVDKMKGNLKKLNGSHLVPIEDKAYQFFGATVKSNDKHDKLLMCAPKYKYFYSKFEVIEPVGTCFYAENGFEKTEEFSSCKQEPARHGRHRLGYGQCGFSGAIPGKKNQDRVFLGAPGVWYWQGAIFSQNTKNQTDRPNTEYGSKEYDHDMMGYATATGDFDGDGIDDIVAGVPRGNDLHGKLVLYTSKLKMMINLTDEVSTQHGQYCGGALAVADVNKDGRDDIIMGCPFYTDYGSVKDAKTQERKPQYDVGKVIVFLQTAPGVFGKQLAVVGDDQWGRFGHSLAAAGDLNLDGYNDVIVGAPYAGKNKQGAVYVIHGSKDGVREKPTQKIEASQIGHGTARAFGFAVAGGVDVDGNGMPDIAVGAWKSGNAAVLLTKPVVTVTGATEPESALINVEEKNCDVDGKLGKQACRHINTCFKYEGKGDTPNDLEFDLRFNLDDHSPEPRAYFLQKDVKSDRSIKVASGSKTRDHPSSIEQRVRLEKGRQKCFRHRFFASSTMKDKLSPIHWSVNYTYVESKSGKLRGDKLEPAIDTTVPLSFQNKINIANNCGKDDLCVPDLKVTAVADREKFLLGTQDNTMLINVTVQNGGEDSYETKLYFDVPQGFEYGGIESVGADGSAPACSPTSDEPDSDGKWTFACDLGNPLPANKVVSSVVRVTASSDKPPLAPISINAHVNSSNDEEAHTIADNKVTFTIPVDFKNQLSLNGRSNPEQVDFSMTNKTRSDVFDDNEIGPVVSHLYQISNRGPSEIDAATLDIFWPSFSTEGGHLLYIITEPVVNPPNKGRCRVKQLQNVNPLNLRITNEHVPTEPPVAKTPNEYSREEDDESYEDETTTQSQTHHQTRTEHTQHHQGPVHVYERDEDKIRQNTGNWQYVEDKKKKGDYEYIPDDQEYDGDDFEDDDEDFDRAGSKRVKRAPVPKKKKKEGSRSGEPRSDKARFSDLREAVKLSKEAGGVVDYKGPLSRASVDCNGLRCTHIECDIYDLKEDEFVLVEIFSRLYTNTLVDERNPGGDISSLALARVTSTKYNWPHKPTLITAVSTNMNAIASEEGRDLPWWLYLLAILIGLAILILLILLLWRCGFFKRNRPPTEHAELRAEKQPAAHYADTQSRYAPQDQYSQGRHGQML.

The N-terminal stretch at 1 to 27 is a signal peptide; that stretch reads MREGSFPRRTRLLCLLAAVVLISTVTS. Residues 28–1153 lie on the Extracellular side of the membrane; sequence FNIDTKNVVL…ASEEGRDLPW (1126 aa). 7 FG-GAP repeats span residues 29 to 96, 110 to 173, 180 to 235, 236 to 292, 293 to 347, 364 to 423, and 427 to 490; these read NIDT…TCRE, NGSH…KTEE, EPAR…TDRP, NTEY…MMIN, LTDE…KPQY, GKQL…GVRE, and QKIE…PESA. Residues asparagine 74, asparagine 110, asparagine 230, and asparagine 292 are each glycosylated (N-linked (GlcNAc...) asparagine). Asparagine 610 is a glycosylation site (N-linked (GlcNAc...) asparagine). The Cell attachment site motif lies at 622-624; sequence RGD. Residues asparagine 681, asparagine 775, and asparagine 819 are each glycosylated (N-linked (GlcNAc...) asparagine). Disordered stretches follow at residues 898–968 and 981–1037; these read LRIT…QNTG and DYEY…KARF. Acidic residues predominate over residues 920–931; sequence REEDDESYEDET. The segment covering 955–964 has biased composition (basic and acidic residues); sequence VYERDEDKIR. Positions 984–1003 are enriched in acidic residues; sequence YIPDDQEYDGDDFEDDDEDF. The span at 1008 to 1023 shows a compositional bias: basic residues; the sequence is SKRVKRAPVPKKKKKE. A compositionally biased stretch (basic and acidic residues) spans 1024 to 1037; sequence GSRSGEPRSDKARF. The helical transmembrane segment at 1154–1174 threads the bilayer; that stretch reads WLYLLAILIGLAILILLILLL. Residues 1175–1224 are Cytoplasmic-facing; that stretch reads WRCGFFKRNRPPTEHAELRAEKQPAAHYADTQSRYAPQDQYSQGRHGQML. Residues 1190-1224 are disordered; that stretch reads AELRAEKQPAAHYADTQSRYAPQDQYSQGRHGQML. The span at 1204–1224 shows a compositional bias: polar residues; sequence DTQSRYAPQDQYSQGRHGQML.

The protein belongs to the integrin alpha chain family. As to quaternary structure, heterodimer of an alpha and a beta subunit. Alpha pat-2 associates with beta pat-3.

Its subcellular location is the membrane. Functionally, required for muscle development probably through the regulation of the actin-myosin cytoskeleton. During the formation of neuromuscular junctions at the larval stage, negatively regulates membrane protrusion from body wall muscles, probably through lamins such as epi-1, lam-2 and unc-52. Required for distal tip cell migration and dorsal pathfinding. Required for egg-laying. May play a role in cell motility and cell-cell interactions. In Caenorhabditis briggsae, this protein is Integrin alpha pat-2.